A 284-amino-acid polypeptide reads, in one-letter code: Bifunctional protein FolD (284 aa).

Residues Gly-166 to Ser-168 and Ile-232 each bind NADP(+).

This sequence belongs to the tetrahydrofolate dehydrogenase/cyclohydrolase family. As to quaternary structure, homodimer.

The catalysed reaction is (6R)-5,10-methylene-5,6,7,8-tetrahydrofolate + NADP(+) = (6R)-5,10-methenyltetrahydrofolate + NADPH. It carries out the reaction (6R)-5,10-methenyltetrahydrofolate + H2O = (6R)-10-formyltetrahydrofolate + H(+). It functions in the pathway one-carbon metabolism; tetrahydrofolate interconversion. Catalyzes the oxidation of 5,10-methylenetetrahydrofolate to 5,10-methenyltetrahydrofolate and then the hydrolysis of 5,10-methenyltetrahydrofolate to 10-formyltetrahydrofolate. This is Bifunctional protein FolD from Shewanella oneidensis (strain ATCC 700550 / JCM 31522 / CIP 106686 / LMG 19005 / NCIMB 14063 / MR-1).